The chain runs to 632 residues: Chaperone protein HtpG (632 aa).

The segment at methionine 1–arginine 339 is a; substrate-binding. The b stretch occupies residues glutamate 340–arginine 559. Residues methionine 560 to alanine 632 form a c region.

It belongs to the heat shock protein 90 family. As to quaternary structure, homodimer.

It is found in the cytoplasm. In terms of biological role, molecular chaperone. Has ATPase activity. This chain is Chaperone protein HtpG, found in Burkholderia cenocepacia (strain HI2424).